A 694-amino-acid chain; its full sequence is MTRTALVTTALPYANGPLHLGHLVGYIQADIWVRARRLRGDKTWFVCADDTHGTPIMLAAEKAGVTPEAFIASIQASHERDFAAFGVTFDHYDSTNSPVNRELTEAFYTKLEAAGHISRRSVAQFYDPAKGMFLPDRYIKGICPNCGSADQYGDNCEVCGATYAPTELKEPRSVISGATPELRDSEHFFFEVGQFDGFLHEWLAGDVALPGVKAKLKEWLDAEGGLRAWDISRDAPYFGFQMPGQPGKYFYVWLDAPIGYLCSFKTLCAQMGEDFAAHLVDGTQTELHHFIGKDIVNFHGLFWPAVLHGTGHRAPTRLHVNGYLTVDGAKMSKSRGTFVMARTFLDVGLEPEALRYYFAAKSSGGVDDLDLNLGDFIARVNADLVGKFVNLASRCAGFIGKRFDGKLAEALPDAAQYDRFVAALAPIREAYERNDAASAIRQTMALADEANKYIDDTKPWVIAKQDSADAQLQSVCTQGLNLFRVLVAALKPILPRTCAEAEAFLSAPMTSWEDVIRPLTSHTIQPYTALFTRIDPKLIDAMTDASKDTLAAPAAPATTSKAAPAKPDTKPAAAANPQSPISNPSFIGMDDFAKLDLRIGKVLVCECVEGSDKLLRFELDAGELGKRQIFSGIRASYGEPEALVGRSVVFIANLAPRKMRFGISDGMILSAGFDGGALALLDADSGAQPGMPVR.

Positions 12–22 (PYANGPLHLGH) match the 'HIGH' region motif. Zn(2+) contacts are provided by Cys143, Cys146, Cys156, and Cys159. Positions 330 to 334 (KMSKS) match the 'KMSKS' region motif. Lys333 provides a ligand contact to ATP. Residues 550-575 (LAAPAAPATTSKAAPAKPDTKPAAAA) show a composition bias toward low complexity. The disordered stretch occupies residues 550–580 (LAAPAAPATTSKAAPAKPDTKPAAAANPQSP). Residues 591 to 694 (DFAKLDLRIG…SGAQPGMPVR (104 aa)) enclose the tRNA-binding domain.

This sequence belongs to the class-I aminoacyl-tRNA synthetase family. MetG type 1 subfamily. Homodimer. The cofactor is Zn(2+).

The protein resides in the cytoplasm. The catalysed reaction is tRNA(Met) + L-methionine + ATP = L-methionyl-tRNA(Met) + AMP + diphosphate. Is required not only for elongation of protein synthesis but also for the initiation of all mRNA translation through initiator tRNA(fMet) aminoacylation. The sequence is that of Methionine--tRNA ligase from Xanthomonas oryzae pv. oryzae (strain MAFF 311018).